A 367-amino-acid chain; its full sequence is Serine/threonine-protein kinase Sgk2 (367 aa).

A disordered region spans residues 1–26; that stretch reads MNSSPAGTPSPQPSRANGNINLGPSA. S10 carries the phosphoserine modification. In terms of domain architecture, Protein kinase spans 35-292; that stretch reads FDFLKVIGKG…FLEIKNHVFF (258 aa). ATP-binding positions include 41–49 and K64; that span reads IGKGNYGKV. A Nuclear localization signal motif is present at residues 68–78; that stretch reads KKSILKKKEQS. D159 acts as the Proton acceptor in catalysis. T193 is subject to Phosphothreonine; by PDPK1. In terms of domain architecture, AGC-kinase C-terminal spans 293 to 367; that stretch reads SPINWDDLYH…APEDDDILDC (75 aa). Phosphoserine occurs at positions 334 and 356. Y357 carries the phosphotyrosine modification.

This sequence belongs to the protein kinase superfamily. AGC Ser/Thr protein kinase family. Activated by phosphorylation on Ser-356 by an unknown kinase (may be mTORC2 but not confirmed), transforming it into a substrate for PDPK1 which then phosphorylates it on Thr-193. As to expression, highly expressed in liver, kidney and pancreas, and at lower levels in brain.

It is found in the cytoplasm. It localises to the nucleus. It carries out the reaction L-seryl-[protein] + ATP = O-phospho-L-seryl-[protein] + ADP + H(+). It catalyses the reaction L-threonyl-[protein] + ATP = O-phospho-L-threonyl-[protein] + ADP + H(+). Two specific sites, one in the kinase domain (Thr-193) and the other in the C-terminal regulatory region (Ser-356), need to be phosphorylated for its full activation. Serine/threonine-protein kinase which is involved in the regulation of a wide variety of ion channels, membrane transporters, cell growth, survival and proliferation. Up-regulates Na(+) channels: SCNN1A/ENAC, K(+) channels: KCNA3/Kv1.3, KCNE1 and KCNQ1, amino acid transporter: SLC6A19, glutamate transporter: SLC1A6/EAAT4, glutamate receptors: GRIA1/GLUR1 and GRIK2/GLUR6, Na(+)/H(+) exchanger: SLC9A3/NHE3, and the Na(+)/K(+) ATPase. The polypeptide is Serine/threonine-protein kinase Sgk2 (SGK2) (Homo sapiens (Human)).